A 373-amino-acid chain; its full sequence is Putative aminopeptidase SgcX (373 aa).

A divalent metal cation is bound by residues His-67 and Asp-180. Catalysis depends on Glu-212, which acts as the Proton acceptor. 3 residues coordinate a divalent metal cation: Glu-213, Asp-235, and His-329.

This sequence belongs to the peptidase M42 family. Requires a divalent metal cation as cofactor.

The sequence is that of Putative aminopeptidase SgcX (sgcX) from Escherichia coli (strain K12).